The sequence spans 333 residues: Protein-methionine-sulfoxide reductase catalytic subunit MsrP (333 aa).

The tat-type signal signal peptide spans 1–43 (MHKHRKPTEADVTPESLFYQRRRILKALGISAAALSLPFSAQA). Residues asparagine 87, 90–91 (YE), cysteine 145, threonine 180, asparagine 232, arginine 237, and 248–250 (NIK) each bind Mo-molybdopterin.

It belongs to the MsrP family. As to quaternary structure, heterodimer of a catalytic subunit (MsrP) and a heme-binding subunit (MsrQ). It depends on Mo-molybdopterin as a cofactor. In terms of processing, predicted to be exported by the Tat system. The position of the signal peptide cleavage has not been experimentally proven.

The protein localises to the periplasm. It catalyses the reaction L-methionyl-[protein] + a quinone + H2O = L-methionyl-(S)-S-oxide-[protein] + a quinol. The enzyme catalyses L-methionyl-[protein] + a quinone + H2O = L-methionyl-(R)-S-oxide-[protein] + a quinol. Its function is as follows. Part of the MsrPQ system that repairs oxidized periplasmic proteins containing methionine sulfoxide residues (Met-O), using respiratory chain electrons. Thus protects these proteins from oxidative-stress damage caused by reactive species of oxygen and chlorine generated by the host defense mechanisms. MsrPQ is essential for the maintenance of envelope integrity under bleach stress, rescuing a wide series of structurally unrelated periplasmic proteins from methionine oxidation. The catalytic subunit MsrP is non-stereospecific, being able to reduce both (R-) and (S-) diastereoisomers of methionine sulfoxide. This Pectobacterium carotovorum subsp. carotovorum (strain PC1) protein is Protein-methionine-sulfoxide reductase catalytic subunit MsrP.